The sequence spans 237 residues: Protein GrpE (237 aa).

2 disordered regions span residues 27 to 51 (EDRE…LSET) and 202 to 237 (AVSS…PQHS). Low complexity-rich tracts occupy residues 33–45 (ASTS…AEAS) and 204–213 (SSGSPTSEPS). The segment covering 227–237 (TPASPQNPQHS) has biased composition (polar residues).

The protein belongs to the GrpE family. As to quaternary structure, homodimer.

Its subcellular location is the cytoplasm. In terms of biological role, participates actively in the response to hyperosmotic and heat shock by preventing the aggregation of stress-denatured proteins, in association with DnaK and GrpE. It is the nucleotide exchange factor for DnaK and may function as a thermosensor. Unfolded proteins bind initially to DnaJ; upon interaction with the DnaJ-bound protein, DnaK hydrolyzes its bound ATP, resulting in the formation of a stable complex. GrpE releases ADP from DnaK; ATP binding to DnaK triggers the release of the substrate protein, thus completing the reaction cycle. Several rounds of ATP-dependent interactions between DnaJ, DnaK and GrpE are required for fully efficient folding. This chain is Protein GrpE, found in Synechococcus sp. (strain JA-3-3Ab) (Cyanobacteria bacterium Yellowstone A-Prime).